The sequence spans 225 residues: Adenylate kinase (225 aa).

Residue 10 to 15 coordinates ATP; sequence GSGKGT. The segment at 30–59 is NMP; the sequence is ESGAIFRENISKGTEIGKKAKEYIDRGDLV. Residues serine 31, arginine 36, 57–59, 85–88, and glutamine 92 each bind AMP; these read DLV and GFPR. The segment at 126-165 is LID; that stretch reads GRRLCENDNNHPNNIFIDAIKPDGDKCRVCGGALSARSDD. Arginine 127 lines the ATP pocket. AMP is bound by residues arginine 162 and arginine 174. Proline 211 lines the ATP pocket.

Belongs to the adenylate kinase family. As to quaternary structure, monomer.

It is found in the cytoplasm. It carries out the reaction AMP + ATP = 2 ADP. It functions in the pathway purine metabolism; AMP biosynthesis via salvage pathway; AMP from ADP: step 1/1. Catalyzes the reversible transfer of the terminal phosphate group between ATP and AMP. Plays an important role in cellular energy homeostasis and in adenine nucleotide metabolism. The protein is Adenylate kinase of Desulfatibacillum aliphaticivorans.